The sequence spans 129 residues: Putative membrane protein insertion efficiency factor (129 aa).

Belongs to the UPF0161 family.

It localises to the cell inner membrane. Functionally, could be involved in insertion of integral membrane proteins into the membrane. The chain is Putative membrane protein insertion efficiency factor from Rhodopseudomonas palustris (strain TIE-1).